The primary structure comprises 975 residues: C-1-tetrahydrofolate synthase, mitochondrial (975 aa).

The N-terminal 34 residues, 1 to 34, are a transit peptide targeting the mitochondrion; it reads MLSRLSLLSNSRAFQQARWRIYRLKVSPTVHASQ. The segment at 35 to 343 is methylenetetrahydrofolate dehydrogenase and cyclohydrolase; it reads YHILSGRKLA…KPLPLHLESP (309 aa). Substrate is bound by residues 83–87 and 130–132; these read YVRMK and IQL. Residues 201 to 203 and serine 226 each bind NADP(+); that span reads GRS. 301–305 is a binding site for substrate; the sequence is PGGVG. A formyltetrahydrofolate synthetase region spans residues 344–975; the sequence is VPSDIDISRA…DDDGEIEGLF (632 aa). Position 408–415 (408–415) interacts with ATP; that stretch reads TPLGEGKS.

This sequence in the N-terminal section; belongs to the tetrahydrofolate dehydrogenase/cyclohydrolase family. It in the C-terminal section; belongs to the formate--tetrahydrofolate ligase family. As to quaternary structure, homodimer.

The protein resides in the mitochondrion. It carries out the reaction (6R)-5,10-methylene-5,6,7,8-tetrahydrofolate + NADP(+) = (6R)-5,10-methenyltetrahydrofolate + NADPH. It catalyses the reaction (6R)-5,10-methenyltetrahydrofolate + H2O = (6R)-10-formyltetrahydrofolate + H(+). The enzyme catalyses (6S)-5,6,7,8-tetrahydrofolate + formate + ATP = (6R)-10-formyltetrahydrofolate + ADP + phosphate. It functions in the pathway one-carbon metabolism; tetrahydrofolate interconversion. In terms of biological role, mitochondrial isozyme of C-1-tetrahydrofolate synthase. The trifunctional enzyme catalyzes the interconversion of the one-carbon derivatives of tetrahydrofolate (THF) between different oxidation states by the enzymatic activities 10-formyltetrahydrofolate synthetase, 5,lO-methenyltetrahydrofolate cyclohydrolase, and 5,lO-methylenetetrahydrofolate dehydrogenase. In Saccharomyces cerevisiae (strain ATCC 204508 / S288c) (Baker's yeast), this protein is C-1-tetrahydrofolate synthase, mitochondrial.